We begin with the raw amino-acid sequence, 479 residues long: NADH dehydrogenase [ubiquinone] flavoprotein 1, mitochondrial (479 aa).

Residue 103 to 112 (GRGGAGFPSG) coordinates NADH. FMN is bound at residue 216 to 264 (RGAGAYICGEETALIESIEGKQGKPRLKPPFPAMAGLYGCPTTVTNVET). [4Fe-4S] cluster-binding residues include cysteine 396, cysteine 399, cysteine 402, and cysteine 442.

It belongs to the complex I 51 kDa subunit family. As to quaternary structure, complex I is composed of about 45 different subunits. This is a component of the flavoprotein-sulfur (FP) fragment of the enzyme. FMN is required as a cofactor. It depends on [4Fe-4S] cluster as a cofactor.

The protein localises to the mitochondrion inner membrane. It carries out the reaction a ubiquinone + NADH + 5 H(+)(in) = a ubiquinol + NAD(+) + 4 H(+)(out). In terms of biological role, core subunit of the mitochondrial membrane respiratory chain NADH dehydrogenase (Complex I) that is believed to belong to the minimal assembly required for catalysis. Complex I functions in the transfer of electrons from NADH to the respiratory chain. The immediate electron acceptor for the enzyme is believed to be ubiquinone. This chain is NADH dehydrogenase [ubiquinone] flavoprotein 1, mitochondrial (ndufv1), found in Dictyostelium discoideum (Social amoeba).